We begin with the raw amino-acid sequence, 277 residues long: 4-diphosphocytidyl-2-C-methyl-D-erythritol kinase (277 aa).

The active site involves Lys-9. 91–101 is an ATP binding site; the sequence is PMGAGLGGGSS. Asp-133 is a catalytic residue.

The protein belongs to the GHMP kinase family. IspE subfamily.

The catalysed reaction is 4-CDP-2-C-methyl-D-erythritol + ATP = 4-CDP-2-C-methyl-D-erythritol 2-phosphate + ADP + H(+). Its pathway is isoprenoid biosynthesis; isopentenyl diphosphate biosynthesis via DXP pathway; isopentenyl diphosphate from 1-deoxy-D-xylulose 5-phosphate: step 3/6. Catalyzes the phosphorylation of the position 2 hydroxy group of 4-diphosphocytidyl-2C-methyl-D-erythritol. In Acinetobacter baumannii (strain AB307-0294), this protein is 4-diphosphocytidyl-2-C-methyl-D-erythritol kinase.